A 157-amino-acid polypeptide reads, in one-letter code: Transcription elongation factor GreA (157 aa).

A coiled-coil region spans residues 47–75 (ENAEYDAAREKQGQIEDRITELENILSNA).

Belongs to the GreA/GreB family.

Functionally, necessary for efficient RNA polymerase transcription elongation past template-encoded arresting sites. The arresting sites in DNA have the property of trapping a certain fraction of elongating RNA polymerases that pass through, resulting in locked ternary complexes. Cleavage of the nascent transcript by cleavage factors such as GreA or GreB allows the resumption of elongation from the new 3'terminus. GreA releases sequences of 2 to 3 nucleotides. This chain is Transcription elongation factor GreA, found in Mycoplasmopsis pulmonis (strain UAB CTIP) (Mycoplasma pulmonis).